The following is a 471-amino-acid chain: Retinoic acid receptor RXR-beta-A (471 aa).

The tract at residues 1-34 (MGDSRDSRSPDSSSVSSPPSGQRSPPLAPSAAAM) is disordered. The tract at residues 1-102 (MGDSRDSRSP…HAVSSSDDVK (102 aa)) is modulating. Positions 10-25 (PDSSSVSSPPSGQRSP) are enriched in low complexity. Positions 122 to 197 (KRLCAICGDR…MGMKREVVQD (76 aa)) form a DNA-binding region, nuclear receptor. 2 consecutive NR C4-type zinc fingers follow at residues 125 to 145 (CAIC…CEGC) and 161 to 185 (CRDN…YQKC). A compositionally biased stretch (basic and acidic residues) spans 196–216 (QDERQRSVQEERQRNKERDGE). The interval 196-226 (QDERQRSVQEERQRNKERDGEVESSSAANEE) is disordered. Positions 198 to 221 (ERQRSVQEERQRNKERDGEVESSS) are hinge. The NR LBD domain maps to 224–467 (NEEMPVEKIL…TFLMEMLEAP (244 aa)).

Belongs to the nuclear hormone receptor family. NR2 subfamily. As to quaternary structure, homodimer. Heterodimer; with a rar molecule. Binds DNA preferentially as a rar/rxr heterodimer. Heterodimerizes with rarga. In terms of tissue distribution, shows uniform expression from the blastula to mid-gastrula stages. At 12 hours post-fertilization (hpf), expressed ubiquitously but more weakly. At 24 hpf, restricted to the ventral diencephalon, pharangeal endoderm and trunk and tail mesoderm; mesoderm expression is in medial cells of each somite along the dorsoventral axis, forming stripes. At 48 hpf, expressed in forebrain, eye, midbrain and anterior hindbrain.

It localises to the nucleus. Receptor for retinoic acid. Retinoic acid receptors bind as heterodimers to their target response elements in response to their ligands, all-trans or 9-cis retinoic acid, and regulate gene expression in various biological processes. The rar/rxr heterodimers bind to the retinoic acid response elements (RARE) composed of tandem 5'-AGGTCA-3' sites known as DR1-DR5. The high affinity ligand for rxrs is 9-cis retinoic acid. The polypeptide is Retinoic acid receptor RXR-beta-A (rxrba) (Danio rerio (Zebrafish)).